The primary structure comprises 164 residues: MAEFSGEPRGEGRRIVVVASRFNEGVTVPLAEGAVSALVGKGVAFDNIDVLWVPGAWELPVAVRRALSSERYDAAVAVGAVIRGDTPHFDIVAGETARGLMEASRDFDVPVTLGLLTTDTLEQAEARAGGVHGNKGADAALAALEVLDLFDRALPANDYDEDGE.

5-amino-6-(D-ribitylamino)uracil is bound by residues Phe-22, 56 to 58 (AWE), and 80 to 82 (AVI). 85-86 (DT) is a (2S)-2-hydroxy-3-oxobutyl phosphate binding site. The active-site Proton donor is the His-88. 5-amino-6-(D-ribitylamino)uracil is bound at residue Leu-113. Arg-127 contacts (2S)-2-hydroxy-3-oxobutyl phosphate.

It belongs to the DMRL synthase family.

It carries out the reaction (2S)-2-hydroxy-3-oxobutyl phosphate + 5-amino-6-(D-ribitylamino)uracil = 6,7-dimethyl-8-(1-D-ribityl)lumazine + phosphate + 2 H2O + H(+). The protein operates within cofactor biosynthesis; riboflavin biosynthesis; riboflavin from 2-hydroxy-3-oxobutyl phosphate and 5-amino-6-(D-ribitylamino)uracil: step 1/2. Its function is as follows. Catalyzes the formation of 6,7-dimethyl-8-ribityllumazine by condensation of 5-amino-6-(D-ribitylamino)uracil with 3,4-dihydroxy-2-butanone 4-phosphate. This is the penultimate step in the biosynthesis of riboflavin. This is 6,7-dimethyl-8-ribityllumazine synthase from Gemmatimonas aurantiaca (strain DSM 14586 / JCM 11422 / NBRC 100505 / T-27).